Reading from the N-terminus, the 1055-residue chain is MYPIIMEWNGGGSFNGRPLSWSKLERILSGKKVESLRPVLHEPDAQAPSSAMQGEASVPFAELHATSSYNFLTGASDPSDVVVQAKKLGLVALSVMDRDGFYGAVRFAEAAAEAGMHTVYGAELSLQEGVLTVLCKNPEGYKKLSHLISDAKMATGEKGEVRYPPLPMVAEHAAGDWVVLAGFQWLDKIDYVIDCFKPENIVLEFGSTMTPEDADRNEYLRRTQAKFQLRGILSTNPESAARGSVRLAGAKQALARKMPLADAESELHPMGTTWMRSGDTLLKAHPDYADLIATTVELAAECAFTLDLVAPNLPKWDTPGEHTEMSWLAHLVSTRIDTRYVGRSADIKARAATQIDYELGVIEKLGFPGYFLVVNDLVEFCRDSNILCQGRGSAANSAVCFVLGITNAEPISAGLLFERFLSPDRDGPPDIDIDIESGRREEVIQYVYEKYGRDNAAQVANVITYRTKGAMRDAARALGYPQGAADAWAKGTSEPPDDVLELAAQFKGQPRHLGIHSGGMVICDRPIADVVPVEWARMDNRSVVQWDKDDCATAGLVKFDLLGLGMLEAIHHMLDLVAEHRGKKINLWELDLAEPEVYDMLCKADAVGVFQVESRAQLSTLPRLKPRTFFDLVVEVALIRPGPIQGGSVHPYLRRRAGEEAITYDHPVLEKSLGKTLGIPLFQEQLMQVAVDAAGFSGGEADSLRRAMGSKRSPERMAALRSRFFQGLKDTNGIVGETAEKLWNKIVAFAAYGFPESHSQSFASLVYFSAWFKYHYPAEFCVGLLRAQPMGFYSPQSLISDARRHGVSILPITVNDSGVEADAPNGAIRLGLNLVKGLGHDAAQRIEDNAPFDSIPDLSRRADLNVAQVEALARAGAVDCLGVGRRQALWQAGVAATEKPGMLPGLSVIEAPALPGMSAFELMATNISATGVTADYQPMALIRERMEELGIVPADRLLEVEDGTRLRIAGIVTHRQRPQTASGLTFLGMEDETGLMNVMVSVGLWQRQRVLARNAKALIIRGIVQNAQGVATVVADRLEPLDMGEFLSRGSRDFR.

Belongs to the DNA polymerase type-C family. DnaE2 subfamily.

The protein localises to the cytoplasm. The catalysed reaction is DNA(n) + a 2'-deoxyribonucleoside 5'-triphosphate = DNA(n+1) + diphosphate. In terms of biological role, DNA polymerase involved in damage-induced mutagenesis and translesion synthesis (TLS). It is not the major replicative DNA polymerase. The sequence is that of Error-prone DNA polymerase from Corynebacterium glutamicum (strain ATCC 13032 / DSM 20300 / JCM 1318 / BCRC 11384 / CCUG 27702 / LMG 3730 / NBRC 12168 / NCIMB 10025 / NRRL B-2784 / 534).